The primary structure comprises 659 residues: MRNYKELKHEKNGNVTEKIGENKGKSKKMSKDESLLSFDLFLEGKEHSAYKFMGAHFITENRKRGVRFTTWSPRASKIYIIGDFNNWELKEEYSMKKINERGIWSLFIPKLEEGIKYKFAVENECGNNTVYKSDPYAFKSELRPNTASVLTKIKSFRWGDKRWLNKREKEGLDNKPMNIYELHLGSWKRKDGEFMTYEEISEVLVEYIKEMGYTHVEFMPVNEHPLDASWGYQGVGYYSVTSRYGDLNGLKTLINKLHKNNIGVLLDWVPSHFCKDEHGLFMFDGSPTYEYEVWWKANNEGWGTCNFDLGRPEVKSFLFSNAMYWINEFHVDGLRVDAVSNMLYLDYGREYGEWEPNIYGENGNLEAIAFLKELNTIIKKEGKGAITVAEESTSWEGITKSVEEGGLGFDYKWNMGWMNDTLSYIELDPIYRKYHHNKMNFSMMYNYSEKFILPISHDEVVHGKKSLINKMWGDDWKKYAGLRLYASFMMGHPGKKLMFMGCEFGQFVEWREWEELQWSVIEEFDIHRKTKEYFKALNKFYLENSSLWSLDYEEEGFKWMDADNSEESVLSFIRIGKNKKEKLIFICNFTPEVYYDFKVGVPELGEYVEVFNSDSLEFGGVGNIMGDSILKATEESFKDFDYSISVKVPPLGTLVLKVK.

The segment at 1 to 26 (MRNYKELKHEKNGNVTEKIGENKGKS) is disordered. The active-site Nucleophile is the D337. E390 acts as the Proton donor in catalysis.

This sequence belongs to the glycosyl hydrolase 13 family. GlgB subfamily. In terms of assembly, monomer.

It catalyses the reaction Transfers a segment of a (1-&gt;4)-alpha-D-glucan chain to a primary hydroxy group in a similar glucan chain.. It participates in glycan biosynthesis; glycogen biosynthesis. Catalyzes the formation of the alpha-1,6-glucosidic linkages in glycogen by scission of a 1,4-alpha-linked oligosaccharide from growing alpha-1,4-glucan chains and the subsequent attachment of the oligosaccharide to the alpha-1,6 position. In Clostridium perfringens (strain SM101 / Type A), this protein is 1,4-alpha-glucan branching enzyme GlgB 2.